The following is an 849-amino-acid chain: Period circadian protein (849 aa).

Over residues 1–13 (MNNMDGSENNAKV) the composition is skewed to polar residues. Residues 1–79 (MNNMDGSENN…LKKKKQVETL (79 aa)) are disordered. 2 stretches are compositionally biased toward low complexity: residues 14-27 (SDSA…NSQS) and 35-58 (STHS…SSSS). Residues 63–74 (DQKKEKELKKKK) carry the Nuclear localization signal motif. PAS domains lie at 166–296 (NGFS…QAVP) and 314–416 (FVIR…YIIE). Residues 680-746 (NNTPSVYEKP…VSTSSQWSSS (67 aa)) form a disordered region. Positions 706–720 (NKHHCPSSRQFRRKQ) are enriched in basic residues. Positions 735–746 (NPVSTSSQWSSS) are enriched in low complexity.

As to quaternary structure, forms a heterodimer with timeless (TIM); the complex then translocates into the nucleus. In terms of processing, phosphorylated with a circadian rhythmicity.

It localises to the nucleus. In terms of biological role, involved in the generation of biological rhythms. The biological cycle depends on the rhythmic formation and nuclear localization of the tim-per complex. Light induces the degradation of tim, which promotes elimination of per. Nuclear activity of the heterodimer coordinatively regulates per and tim transcription negative feedback loop. Behaves as a negative element in circadian transcriptional loop. Does not appear to bind DNA, suggesting indirect transcriptional inhibition. Expression exhibits prominent circadian variation in adult heads and in particular in the photoreceptor nuclei. In Antheraea pernyi (Chinese oak silk moth), this protein is Period circadian protein (per).